A 409-amino-acid chain; its full sequence is DNA primase DnaG (409 aa).

In terms of domain architecture, Toprim spans 175–261 (DAIIVVEGRA…EVEELTRKEI (87 aa)). 3 residues coordinate Mg(2+): glutamate 181, aspartate 223, and aspartate 225. The segment covering 280–289 (ERPKDKEREK) has biased composition (basic and acidic residues). The disordered stretch occupies residues 280–322 (ERPKDKEREKGKKPKPKKRPERRGRPRKKKARPKRGPQERRLL). Positions 290-314 (GKKPKPKKRPERRGRPRKKKARPKR) are enriched in basic residues.

It belongs to the archaeal DnaG primase family. In terms of assembly, forms a ternary complex with MCM helicase and DNA. Component of the archaeal exosome complex. Requires Mg(2+) as cofactor.

It carries out the reaction ssDNA + n NTP = ssDNA/pppN(pN)n-1 hybrid + (n-1) diphosphate.. In terms of biological role, RNA polymerase that catalyzes the synthesis of short RNA molecules used as primers for DNA polymerase during DNA replication. Also part of the exosome, which is a complex involved in RNA degradation. Acts as a poly(A)-binding protein that enhances the interaction between heteromeric, adenine-rich transcripts and the exosome. The chain is DNA primase DnaG from Methanopyrus kandleri (strain AV19 / DSM 6324 / JCM 9639 / NBRC 100938).